A 153-amino-acid polypeptide reads, in one-letter code: Ribonuclease H (153 aa).

The 142-residue stretch at 7 to 148 (PADLVEMWTD…ADMLANQGVA (142 aa)) folds into the RNase H type-1 domain. Residues D16, E54, D76, and D140 each coordinate Mg(2+).

It belongs to the RNase H family. As to quaternary structure, monomer. Mg(2+) is required as a cofactor.

It localises to the cytoplasm. It catalyses the reaction Endonucleolytic cleavage to 5'-phosphomonoester.. In terms of biological role, endonuclease that specifically degrades the RNA of RNA-DNA hybrids. The protein is Ribonuclease H of Bordetella avium (strain 197N).